Reading from the N-terminus, the 956-residue chain is uncharacterized protein (956 aa).

One can recognise a Fibronectin type-III domain in the interval 40 to 141 (PATKVSIDKI…IYCMTKAREA (102 aa)). Disordered stretches follow at residues 152–173 (RNTI…PAPL) and 488–600 (NNGD…SYSH). Composition is skewed to polar residues over residues 153-165 (NTIT…QPRN) and 488-523 (NNGD…SRTG). Residue Thr-154 is modified to Phosphothreonine. Phosphoserine is present on residues Ser-501 and Ser-520. Residues 524–543 (SIDLISNNNKSINNSNADSA) show a composition bias toward low complexity. The segment covering 552-563 (VSYSPSNEPIQP) has biased composition (polar residues). The span at 564–574 (SSSLLSQLTQD) shows a compositional bias: low complexity. The segment covering 578 to 599 (RSMLSNHISSNNENKQQPSSYS) has biased composition (polar residues). Phosphoserine occurs at positions 802, 842, and 895. A disordered region spans residues 875–956 (VGPKVPAKEP…NLFNPHSHDS (82 aa)). Residues 895 to 904 (SNSSISSAWS) show a composition bias toward low complexity.

This is an uncharacterized protein from Saccharomyces cerevisiae (strain ATCC 204508 / S288c) (Baker's yeast).